Reading from the N-terminus, the 64-residue chain is Large ribosomal subunit protein bL28 (64 aa).

It belongs to the bacterial ribosomal protein bL28 family.

This chain is Large ribosomal subunit protein bL28, found in Trichlorobacter lovleyi (strain ATCC BAA-1151 / DSM 17278 / SZ) (Geobacter lovleyi).